We begin with the raw amino-acid sequence, 390 residues long: GTP 3',8-cyclase, mitochondrial (390 aa).

Residues 1–45 (MRRCFSKITDCHLGFKNSNFLLVGSEVGSGSVTRTITTTTSERLF) constitute a mitochondrion transit peptide. In terms of domain architecture, Radical SAM core spans 69 to 290 (KFGRLHTYLR…PSIKRMQDHP (222 aa)). Arg-78 contributes to the GTP binding site. Residues Cys-85 and Cys-89 each coordinate [4Fe-4S] cluster. Tyr-91 contributes to the S-adenosyl-L-methionine binding site. A [4Fe-4S] cluster-binding site is contributed by Cys-92. Arg-128 contacts GTP. Residue Gly-132 participates in S-adenosyl-L-methionine binding. Thr-159 is a binding site for GTP. Ser-183 is a binding site for S-adenosyl-L-methionine. Lys-220 contacts GTP. Position 254 (Met-254) interacts with S-adenosyl-L-methionine. The [4Fe-4S] cluster site is built by Cys-317 and Cys-320. 322–324 (RLR) serves as a coordination point for GTP. Cys-334 is a [4Fe-4S] cluster binding site.

This sequence belongs to the radical SAM superfamily. MoaA family. In terms of assembly, homodimer. The cofactor is [4Fe-4S] cluster. In terms of tissue distribution, expressed in all organs, with an abundant expression in the roots.

Its subcellular location is the mitochondrion matrix. The enzyme catalyses GTP + AH2 + S-adenosyl-L-methionine = (8S)-3',8-cyclo-7,8-dihydroguanosine 5'-triphosphate + 5'-deoxyadenosine + L-methionine + A + H(+). The protein operates within cofactor biosynthesis; molybdopterin biosynthesis. Its function is as follows. Catalyzes the cyclization of GTP to (8S)-3',8-cyclo-7,8-dihydroguanosine 5'-triphosphate. The protein is GTP 3',8-cyclase, mitochondrial (CNX2) of Arabidopsis thaliana (Mouse-ear cress).